A 35-amino-acid polypeptide reads, in one-letter code: Basic endochitinase CH1 (35 aa).

The protein belongs to the glycosyl hydrolase 19 family. Chitinase class I subfamily.

The enzyme catalyses Random endo-hydrolysis of N-acetyl-beta-D-glucosaminide (1-&gt;4)-beta-linkages in chitin and chitodextrins.. Its function is as follows. Defense against chitin-containing fungal pathogens. The polypeptide is Basic endochitinase CH1 (Castanea sativa (Sweet chestnut)).